The chain runs to 386 residues: Sulfate adenylyltransferase (386 aa).

The protein belongs to the sulfate adenylyltransferase family.

The catalysed reaction is sulfate + ATP + H(+) = adenosine 5'-phosphosulfate + diphosphate. It participates in sulfur metabolism; hydrogen sulfide biosynthesis; sulfite from sulfate: step 1/3. This chain is Sulfate adenylyltransferase, found in Persephonella marina (strain DSM 14350 / EX-H1).